The primary structure comprises 393 residues: uncharacterized protein (393 aa).

Residues Cys72, Cys82, Cys85, and Cys160 each coordinate [4Fe-4S] cluster. S-adenosyl-L-methionine-binding residues include Gln215, Phe245, Glu267, and Asp313. The active-site Nucleophile is Cys340.

This sequence belongs to the class I-like SAM-binding methyltransferase superfamily. RNA M5U methyltransferase family.

This is an uncharacterized protein from Nitrosomonas europaea (strain ATCC 19718 / CIP 103999 / KCTC 2705 / NBRC 14298).